The chain runs to 325 residues: Ribose-phosphate pyrophosphokinase 2 (325 aa).

ATP is bound at residue 96-101 (RQDKKD). The Mg(2+) site is built by D135, H137, D146, and D150. ATP is bound at residue H137. Residues 219–234 (KDRVAILVDDMADTCG) form a binding of phosphoribosylpyrophosphate region.

It belongs to the ribose-phosphate pyrophosphokinase family. As to quaternary structure, homodimer. The active form is probably a hexamer composed of 3 homodimers. The cofactor is Mg(2+).

The enzyme catalyses D-ribose 5-phosphate + ATP = 5-phospho-alpha-D-ribose 1-diphosphate + AMP + H(+). It functions in the pathway metabolic intermediate biosynthesis; 5-phospho-alpha-D-ribose 1-diphosphate biosynthesis; 5-phospho-alpha-D-ribose 1-diphosphate from D-ribose 5-phosphate (route I): step 1/1. With respect to regulation, activated by magnesium and inorganic phosphate. Competitively or non-competitively inhibited by ADP, 2,3-bisphosphoglyceride or GDP. Functionally, catalyzes the synthesis of phosphoribosylpyrophosphate (PRPP) that is essential for nucleotide synthesis. This Gallus gallus (Chicken) protein is Ribose-phosphate pyrophosphokinase 2 (PRPS2).